The primary structure comprises 216 residues: Guanylate kinase (216 aa).

The Guanylate kinase-like domain maps to 11–189 (GVLIVISGPS…AVKKIEAILL (179 aa)). 18-25 (GPSGAGKG) provides a ligand contact to ATP.

Belongs to the guanylate kinase family.

The protein localises to the cytoplasm. The enzyme catalyses GMP + ATP = GDP + ADP. In terms of biological role, essential for recycling GMP and indirectly, cGMP. This chain is Guanylate kinase, found in Clostridium perfringens (strain ATCC 13124 / DSM 756 / JCM 1290 / NCIMB 6125 / NCTC 8237 / Type A).